A 296-amino-acid polypeptide reads, in one-letter code: Large ribosomal subunit protein uL18A (296 aa).

Residues 251–296 (PVHEKKPKKEVKKKRWNRAKLSLEQKKDRVAQKKASFLRAQEKADS) form a disordered region. Residues 255–268 (KKPKKEVKKKRWNR) are compositionally biased toward basic residues. Over residues 271–281 (LSLEQKKDRVA) the composition is skewed to basic and acidic residues.

This sequence belongs to the universal ribosomal protein uL18 family. In terms of assembly, component of the large ribosomal subunit (LSU). Part of a LSU subcomplex, the 5S RNP which is composed of the 5S RNA, RPL5 and RPL11.

The protein localises to the cytoplasm. The protein resides in the nucleus. Its subcellular location is the nucleolus. In terms of biological role, component of the ribosome, a large ribonucleoprotein complex responsible for the synthesis of proteins in the cell. The small ribosomal subunit (SSU) binds messenger RNAs (mRNAs) and translates the encoded message by selecting cognate aminoacyl-transfer RNA (tRNA) molecules. The large subunit (LSU) contains the ribosomal catalytic site termed the peptidyl transferase center (PTC), which catalyzes the formation of peptide bonds, thereby polymerizing the amino acids delivered by tRNAs into a polypeptide chain. The nascent polypeptides leave the ribosome through a tunnel in the LSU and interact with protein factors that function in enzymatic processing, targeting, and the membrane insertion of nascent chains at the exit of the ribosomal tunnel. As part of the 5S RNP/5S ribonucleoprotein particle it is an essential component of the LSU, required for its formation and the maturation of rRNAs. It also couples ribosome biogenesis to p53/TP53 activation. As part of the 5S RNP it accumulates in the nucleoplasm and inhibits MDM2, when ribosome biogenesis is perturbed, mediating the stabilization and the activation of TP53. In Xenopus laevis (African clawed frog), this protein is Large ribosomal subunit protein uL18A (rpl5-a).